The sequence spans 344 residues: N-acetyl-gamma-glutamyl-phosphate reductase (344 aa).

Cys148 is a catalytic residue.

The protein belongs to the NAGSA dehydrogenase family. Type 1 subfamily.

Its subcellular location is the cytoplasm. It catalyses the reaction N-acetyl-L-glutamate 5-semialdehyde + phosphate + NADP(+) = N-acetyl-L-glutamyl 5-phosphate + NADPH + H(+). Its pathway is amino-acid biosynthesis; L-arginine biosynthesis; N(2)-acetyl-L-ornithine from L-glutamate: step 3/4. Functionally, catalyzes the NADPH-dependent reduction of N-acetyl-5-glutamyl phosphate to yield N-acetyl-L-glutamate 5-semialdehyde. The polypeptide is N-acetyl-gamma-glutamyl-phosphate reductase (Clostridium botulinum (strain Alaska E43 / Type E3)).